A 539-amino-acid polypeptide reads, in one-letter code: CTP synthase (539 aa).

The segment at 1-268 is amidoligase domain; sequence MSFKCIFLTG…STFITEKLGL (268 aa). S14 provides a ligand contact to CTP. Position 14 (S14) interacts with UTP. 15-20 provides a ligand contact to ATP; the sequence is SLGKGL. L-glutamine is bound at residue Y55. D72 provides a ligand contact to ATP. Positions 72 and 142 each coordinate Mg(2+). Residues 149-151, 188-193, and K224 each bind CTP; these read DIE and KTKPTQ. UTP contacts are provided by residues 188-193 and K224; that span reads KTKPTQ. Residues 294 to 533 form the Glutamine amidotransferase type-1 domain; it reads RIGLVGKYVQ…IQAAILYSRN (240 aa). L-glutamine is bound at residue G353. C380 (nucleophile; for glutamine hydrolysis) is an active-site residue. Residues 381–384, E404, and R461 contribute to the L-glutamine site; that span reads LGMQ. Active-site residues include H506 and E508.

Belongs to the CTP synthase family. Homotetramer.

The catalysed reaction is UTP + L-glutamine + ATP + H2O = CTP + L-glutamate + ADP + phosphate + 2 H(+). It carries out the reaction L-glutamine + H2O = L-glutamate + NH4(+). It catalyses the reaction UTP + NH4(+) + ATP = CTP + ADP + phosphate + 2 H(+). Its pathway is pyrimidine metabolism; CTP biosynthesis via de novo pathway; CTP from UDP: step 2/2. Allosterically activated by GTP, when glutamine is the substrate; GTP has no effect on the reaction when ammonia is the substrate. The allosteric effector GTP functions by stabilizing the protein conformation that binds the tetrahedral intermediate(s) formed during glutamine hydrolysis. Inhibited by the product CTP, via allosteric rather than competitive inhibition. Catalyzes the ATP-dependent amination of UTP to CTP with either L-glutamine or ammonia as the source of nitrogen. Regulates intracellular CTP levels through interactions with the four ribonucleotide triphosphates. The protein is CTP synthase of Chlamydia felis (strain Fe/C-56) (Chlamydophila felis).